Here is a 409-residue protein sequence, read N- to C-terminus: MARAKFERNKPHLNIGTIGHVDHGKTTLTAAITMTLAALGQATAKGYDQIDNAPEEKARGITINTAHVEYETENRHYAHVDCPGHADYVKNMITGAAQMDGGILVVAATDGPMPQTREHILLAKQVGVPSLVVFLNKEDLMDDPELLELVELELRELLSSYDFPGDDIPIIKGSGLQALEAMTKNPKTKKGENPWVDKIYELMDAVDSFIPTPERDVDKPFLMAVEDVFTITGRGTVATGRIERGKVKVGDTVELIGLKDTRTTAVTGIEMFKKSLEEGLAGDNAGVLLRGLKKEDIERGMVIAKPGSITPHTQFEGEVYVLTEKEGGRKTPFFAGYRPQFYVRTTDVTGTIKAYTSDEGKEVEMVMPGDRIKMTVELINAIAIEQGMRFAIREGGRTIGAGVVSKIIK.

Positions 10–214 (KPHLNIGTIG…AVDSFIPTPE (205 aa)) constitute a tr-type G domain. The tract at residues 19–26 (GHVDHGKT) is G1. 19-26 (GHVDHGKT) contacts GTP. Thr-26 lines the Mg(2+) pocket. Residues 60-64 (GITIN) are G2. Positions 81–84 (DCPG) are G3. GTP is bound by residues 81–85 (DCPGH) and 136–139 (NKED). Residues 136 to 139 (NKED) are G4. Positions 174–176 (SGL) are G5.

The protein belongs to the TRAFAC class translation factor GTPase superfamily. Classic translation factor GTPase family. EF-Tu/EF-1A subfamily. In terms of assembly, monomer.

It is found in the cytoplasm. The catalysed reaction is GTP + H2O = GDP + phosphate + H(+). In terms of biological role, GTP hydrolase that promotes the GTP-dependent binding of aminoacyl-tRNA to the A-site of ribosomes during protein biosynthesis. This is Elongation factor Tu from Nostoc punctiforme (strain ATCC 29133 / PCC 73102).